A 251-amino-acid chain; its full sequence is Flagellar L-ring protein (251 aa).

The signal sequence occupies residues M1–A17. C18 carries N-palmitoyl cysteine lipidation. C18 is lipidated: S-diacylglycerol cysteine.

Belongs to the FlgH family. As to quaternary structure, the basal body constitutes a major portion of the flagellar organelle and consists of four rings (L,P,S, and M) mounted on a central rod.

It localises to the cell outer membrane. Its subcellular location is the bacterial flagellum basal body. Assembles around the rod to form the L-ring and probably protects the motor/basal body from shearing forces during rotation. This is Flagellar L-ring protein from Maricaulis maris (strain MCS10) (Caulobacter maris).